The following is a 350-amino-acid chain: Protein RecA (350 aa).

67-74 lines the ATP pocket; sequence GPESSGKT.

It belongs to the RecA family.

Its subcellular location is the cytoplasm. Can catalyze the hydrolysis of ATP in the presence of single-stranded DNA, the ATP-dependent uptake of single-stranded DNA by duplex DNA, and the ATP-dependent hybridization of homologous single-stranded DNAs. It interacts with LexA causing its activation and leading to its autocatalytic cleavage. The sequence is that of Protein RecA from Chromobacterium violaceum (strain ATCC 12472 / DSM 30191 / JCM 1249 / CCUG 213 / NBRC 12614 / NCIMB 9131 / NCTC 9757 / MK).